The following is a 533-amino-acid chain: Aspartic proteinase sxa1 (533 aa).

The N-terminal stretch at 1–23 (MKASFFVFAISALQALQASVASA) is a signal peptide. The 359-residue stretch at 76–434 (YFANLTLGSN…DWDAQKIGLA (359 aa)) folds into the Peptidase A1 domain. Asn-79 carries an N-linked (GlcNAc...) asparagine glycan. Asp-94 is a catalytic residue. 8 N-linked (GlcNAc...) asparagine glycosylation sites follow: Asn-106, Asn-138, Asn-153, Asn-166, Asn-271, Asn-278, Asn-299, and Asn-319. Residue Asp-325 is part of the active site. N-linked (GlcNAc...) asparagine glycosylation is present at Asn-439.

Belongs to the peptidase A1 family.

Its function is as follows. Involved in degradation or processing of the mating pheromones. Its loss may cause a persistent response to the pheromones. It may cleave the mating pheromone M-factor. May be involved in processing of zymogens that are required for zygote formation. The protein is Aspartic proteinase sxa1 (sxa1) of Schizosaccharomyces pombe (strain 972 / ATCC 24843) (Fission yeast).